The following is a 1132-amino-acid chain: APC membrane recruitment protein 1 (1132 aa).

An N-acetylmethionine modification is found at Met1. Positions 1–21 (MESQQDEAVQTKGASTSSDAQ) are enriched in polar residues. 8 disordered regions span residues 1-256 (MESQ…ACKN), 268-301 (FMQP…NPPN), 338-423 (SMTD…GEEN), 469-505 (GLGE…DSGE), 674-699 (TSGG…EPDW), 736-770 (MQEA…GNAT), 924-949 (ELQA…DSPL), and 1038-1132 (SQAS…NLAK). The span at 24 to 35 (GAEKGAKNKTTE) shows a compositional bias: basic and acidic residues. Positions 121 to 133 (SKSSAQFPSSQSA) are enriched in low complexity. Basic and acidic residues-rich tracts occupy residues 195–208 (KELE…HEHV), 218–229 (EIFRDTRKENAK), and 281–290 (EEPHTSETEG). Acidic residues predominate over residues 372 to 423 (ALPDDDDNDDEEEEEEEEEEEEEEEEEEEEEEEEEEEELLEDEEEVKDGEEN). Polar residues-rich tracts occupy residues 475–486 (TPQSDQQESAPN) and 677–696 (GSQT…SSSE). Acidic residues-rich tracts occupy residues 756–765 (EEPEEEEEEK) and 931–941 (DSDEEGEEEEG). 2 stretches are compositionally biased toward polar residues: residues 1059-1072 (SCSS…QSQA) and 1115-1132 (ASLS…NLAK).

Belongs to the Amer family. Interacts with CTNNB1, AXIN1, LRP6, KEAP1, APC and BTRC. Interacts with SCF (SKP1-CUL1-F-box protein) E3 ubiquitin-protein ligase complexes containing BTRC and/or FBXW11. Identified in the beta-catenin destruction complex containing CTNNB1, APC, AXIN1 and AXIN2. Interacts with WT1. Expressed in kidney.

The protein resides in the cytoplasm. The protein localises to the cell membrane. Its subcellular location is the nucleus. Functionally, regulator of the canonical Wnt signaling pathway. Acts by specifically binding phosphatidylinositol 4,5-bisphosphate (PtdIns(4,5)P2), translocating to the cell membrane and interacting with key regulators of the canonical Wnt signaling pathway, such as components of the beta-catenin destruction complex. Acts both as a positive and negative regulator of the Wnt signaling pathway, depending on the context: acts as a positive regulator by promoting LRP6 phosphorylation. Also acts as a negative regulator by acting as a scaffold protein for the beta-catenin destruction complex and promoting stabilization of Axin at the cell membrane. Promotes CTNNB1 ubiquitination and degradation. Involved in kidney development. The protein is APC membrane recruitment protein 1 (Amer1) of Mus musculus (Mouse).